The primary structure comprises 216 residues: Probable nicotinate-nucleotide adenylyltransferase (216 aa).

It belongs to the NadD family.

The enzyme catalyses nicotinate beta-D-ribonucleotide + ATP + H(+) = deamido-NAD(+) + diphosphate. It functions in the pathway cofactor biosynthesis; NAD(+) biosynthesis; deamido-NAD(+) from nicotinate D-ribonucleotide: step 1/1. Functionally, catalyzes the reversible adenylation of nicotinate mononucleotide (NaMN) to nicotinic acid adenine dinucleotide (NaAD). This is Probable nicotinate-nucleotide adenylyltransferase from Marinobacter nauticus (strain ATCC 700491 / DSM 11845 / VT8) (Marinobacter aquaeolei).